Consider the following 65-residue polypeptide: Temporin-LK1 (65 aa).

The first 22 residues, 1–22, serve as a signal peptide directing secretion; it reads MFTMKKSLLLLFFLGAINLPLC. The propeptide occupies 23-44; sequence QEERNAEEERRDGDDEGSVEVQ. Phenylalanine 63 bears the Phenylalanine amide mark.

In terms of tissue distribution, expressed by the skin glands.

Its subcellular location is the secreted. Its function is as follows. Has antimicrobial activity against Gram-positive bacteria S.aureus ATCC 2592 (MIC=2.5 uM), S.aureus ATCC 43300 (MIC=2.5 uM) and B.subtilis (MIC=15.0 uM), against Gram-negative bacteria E.coli ML-35P (MIC=30.0 uM), P.aeruginosa PA01 (MIC=2.5 uM) and P.aeruginosa ATCC 27853 (MIC=2.5 uM) and against fungus C.albicans ATCC 2002 (MIC=5.0 uM). This chain is Temporin-LK1, found in Limnonectes kuhlii (Kuhl's Creek frog).